The chain runs to 202 residues: Glycerol-3-phosphate acyltransferase (202 aa).

4 helical membrane passes run 2–22, 85–105, 119–139, and 158–178; these read ANLL…AVVV, LAMV…HRFA, AINP…AFFF, and VLME…ILLI.

Belongs to the PlsY family. In terms of assembly, probably interacts with PlsX.

The protein resides in the cell inner membrane. It carries out the reaction an acyl phosphate + sn-glycerol 3-phosphate = a 1-acyl-sn-glycero-3-phosphate + phosphate. It participates in lipid metabolism; phospholipid metabolism. Functionally, catalyzes the transfer of an acyl group from acyl-phosphate (acyl-PO(4)) to glycerol-3-phosphate (G3P) to form lysophosphatidic acid (LPA). This enzyme utilizes acyl-phosphate as fatty acyl donor, but not acyl-CoA or acyl-ACP. This chain is Glycerol-3-phosphate acyltransferase, found in Cupriavidus pinatubonensis (strain JMP 134 / LMG 1197) (Cupriavidus necator (strain JMP 134)).